Here is a 363-residue protein sequence, read N- to C-terminus: Probable endopolygalacturonase B (363 aa).

An N-terminal signal peptide occupies residues 1 to 20 (MQLLQSSVIAATVGAALVAA). Positions 21–28 (VPVELEAR) are excised as a propeptide. A disulfide bridge connects residues C31 and C46. 6 PbH1 repeats span residues 158–187 (SDNL…DVGS), 188–209 (STYI…AINS), 210–230 (GSHI…SIGS), 239–260 (VEDV…RIKT), 268–290 (VSNV…IVEQ), and 302–347 (TNGI…SITG). N162 carries N-linked (GlcNAc...) asparagine glycosylation. The Proton donor role is filled by D202. An intrachain disulfide couples C204 to C220. H224 is an active-site residue. 2 cysteine pairs are disulfide-bonded: C330–C335 and C354–C363.

The protein belongs to the glycosyl hydrolase 28 family.

Its subcellular location is the secreted. The catalysed reaction is (1,4-alpha-D-galacturonosyl)n+m + H2O = (1,4-alpha-D-galacturonosyl)n + (1,4-alpha-D-galacturonosyl)m.. In terms of biological role, involved in maceration and soft-rotting of plant tissue. Hydrolyzes the 1,4-alpha glycosidic bonds of de-esterified pectate in the smooth region of the plant cell wall. This is Probable endopolygalacturonase B (pgaB) from Aspergillus flavus (strain ATCC 200026 / FGSC A1120 / IAM 13836 / NRRL 3357 / JCM 12722 / SRRC 167).